The primary structure comprises 313 residues: Ribonuclease Z (313 aa).

Residues His-63, His-65, Asp-67, His-68, His-142, Asp-212, and His-270 each coordinate Zn(2+). Asp-67 functions as the Proton acceptor in the catalytic mechanism.

This sequence belongs to the RNase Z family. Homodimer. The cofactor is Zn(2+).

The catalysed reaction is Endonucleolytic cleavage of RNA, removing extra 3' nucleotides from tRNA precursor, generating 3' termini of tRNAs. A 3'-hydroxy group is left at the tRNA terminus and a 5'-phosphoryl group is left at the trailer molecule.. Zinc phosphodiesterase, which displays some tRNA 3'-processing endonuclease activity. Probably involved in tRNA maturation, by removing a 3'-trailer from precursor tRNA. The sequence is that of Ribonuclease Z from Enterococcus faecalis (strain ATCC 700802 / V583).